The primary structure comprises 341 residues: L-threonine 3-dehydrogenase (341 aa).

Residue Cys38 participates in Zn(2+) binding. Residues Thr40 and His43 each act as charge relay system in the active site. Zn(2+) is bound by residues His63, Glu64, Cys93, Cys96, Cys99, and Cys107. Residues Ile175, Asp195, Arg200, 262 to 264 (LGI), and 286 to 287 (IY) contribute to the NAD(+) site.

It belongs to the zinc-containing alcohol dehydrogenase family. Homotetramer. The cofactor is Zn(2+).

It is found in the cytoplasm. It catalyses the reaction L-threonine + NAD(+) = (2S)-2-amino-3-oxobutanoate + NADH + H(+). It functions in the pathway amino-acid degradation; L-threonine degradation via oxydo-reductase pathway; glycine from L-threonine: step 1/2. Its function is as follows. Catalyzes the NAD(+)-dependent oxidation of L-threonine to 2-amino-3-ketobutyrate. The chain is L-threonine 3-dehydrogenase from Klebsiella pneumoniae (strain 342).